Consider the following 493-residue polypeptide: Membrane-bound lytic murein transglycosylase F (493 aa).

A signal peptide spans 1–21 (MKRLRFNYLLIGLITVLLALA). Positions 22 to 268 (LWPSIPWYGG…RLDEKYLGHV (247 aa)) are non-LT domain. Residues 269–493 (GTFDYVDTRT…LNPVSALPLP (225 aa)) are LT domain. E313 is an active-site residue.

This sequence in the N-terminal section; belongs to the bacterial solute-binding protein 3 family. The protein in the C-terminal section; belongs to the transglycosylase Slt family.

Its subcellular location is the cell outer membrane. It carries out the reaction Exolytic cleavage of the (1-&gt;4)-beta-glycosidic linkage between N-acetylmuramic acid (MurNAc) and N-acetylglucosamine (GlcNAc) residues in peptidoglycan, from either the reducing or the non-reducing ends of the peptidoglycan chains, with concomitant formation of a 1,6-anhydrobond in the MurNAc residue.. In terms of biological role, murein-degrading enzyme that degrades murein glycan strands and insoluble, high-molecular weight murein sacculi, with the concomitant formation of a 1,6-anhydromuramoyl product. Lytic transglycosylases (LTs) play an integral role in the metabolism of the peptidoglycan (PG) sacculus. Their lytic action creates space within the PG sacculus to allow for its expansion as well as for the insertion of various structures such as secretion systems and flagella. This Erwinia tasmaniensis (strain DSM 17950 / CFBP 7177 / CIP 109463 / NCPPB 4357 / Et1/99) protein is Membrane-bound lytic murein transglycosylase F.